A 30-amino-acid chain; its full sequence is 136 kDa hydroxyproline-rich cell wall glycoprotein, major component (30 aa).

Pro-8, Pro-9, Pro-10, Pro-11, Pro-12, Pro-17, Pro-18, Pro-19, Pro-20, Pro-26, Pro-27, Pro-28, and Pro-29 each carry 4-hydroxyproline.

In terms of processing, O-glycosylated.

The protein resides in the secreted. Its subcellular location is the cell wall. The sequence is that of 136 kDa hydroxyproline-rich cell wall glycoprotein, major component from Phaseolus vulgaris (Kidney bean).